The chain runs to 172 residues: Thioredoxin Y1, chloroplastic (172 aa).

The transit peptide at 1–62 (MASISLSSST…SSTTRCTPRR (62 aa)) directs the protein to the chloroplast. In terms of domain architecture, Thioredoxin spans 63-169 (IEAKKQTFDS…LIQRIEDSLK (107 aa)). Active-site nucleophile residues include cysteine 93 and cysteine 96. A disulfide bond links cysteine 93 and cysteine 96.

This sequence belongs to the thioredoxin family. Plant Y-type subfamily. Expressed in roots and seeds.

The protein localises to the plastid. It is found in the chloroplast stroma. Thiol-disulfide oxidoreductase that poorly activates chloroplastic malate dehydrogenase (NADP-MDH) and fructose-1,6-bisphosphatase. Provides reducing equivalents for peroxiredoxin Q. The protein is Thioredoxin Y1, chloroplastic of Arabidopsis thaliana (Mouse-ear cress).